Reading from the N-terminus, the 271-residue chain is Tryptophan synthase alpha chain (271 aa).

Catalysis depends on proton acceptor residues Glu-53 and Asp-64.

Belongs to the TrpA family. Tetramer of two alpha and two beta chains.

It catalyses the reaction (1S,2R)-1-C-(indol-3-yl)glycerol 3-phosphate + L-serine = D-glyceraldehyde 3-phosphate + L-tryptophan + H2O. It participates in amino-acid biosynthesis; L-tryptophan biosynthesis; L-tryptophan from chorismate: step 5/5. Its function is as follows. The alpha subunit is responsible for the aldol cleavage of indoleglycerol phosphate to indole and glyceraldehyde 3-phosphate. This chain is Tryptophan synthase alpha chain, found in Streptomyces coelicolor (strain ATCC BAA-471 / A3(2) / M145).